We begin with the raw amino-acid sequence, 318 residues long: Acetyl-coenzyme A carboxylase carboxyl transferase subunit alpha (318 aa).

A CoA carboxyltransferase C-terminal domain is found at 38 to 292; that stretch reads KLEKRLAKLE…NKTITKSLHA (255 aa).

The protein belongs to the AccA family. Acetyl-CoA carboxylase is a heterohexamer composed of biotin carboxyl carrier protein (AccB), biotin carboxylase (AccC) and two subunits each of ACCase subunit alpha (AccA) and ACCase subunit beta (AccD).

Its subcellular location is the cytoplasm. It catalyses the reaction N(6)-carboxybiotinyl-L-lysyl-[protein] + acetyl-CoA = N(6)-biotinyl-L-lysyl-[protein] + malonyl-CoA. The protein operates within lipid metabolism; malonyl-CoA biosynthesis; malonyl-CoA from acetyl-CoA: step 1/1. In terms of biological role, component of the acetyl coenzyme A carboxylase (ACC) complex. First, biotin carboxylase catalyzes the carboxylation of biotin on its carrier protein (BCCP) and then the CO(2) group is transferred by the carboxyltransferase to acetyl-CoA to form malonyl-CoA. The protein is Acetyl-coenzyme A carboxylase carboxyl transferase subunit alpha of Listeria innocua serovar 6a (strain ATCC BAA-680 / CLIP 11262).